A 189-amino-acid polypeptide reads, in one-letter code: Phomopsin biosynthesis cluster protein C' (189 aa).

This sequence belongs to the oryJ family.

Functionally, part of the gene cluster that mediates the biosynthesis of the phomopsins, a group of hexapeptide mycotoxins which infects lupins and causes lupinosis disease in livestock. The role of phomC' within the phomopsins biosynthesis pathway has still to be determined. The pathway starts with the processing of the precursor phomA by several endopeptidases including kexin proteases as well as the cluster-specific S41 family peptidase phomP1 and the oligopeptidase phomG to produce 10 identical copies of the hexapeptide Tyr-Val-Ile-Pro-Ile-Asp. After being excised from the precursor peptide, the core peptides are cyclized and modified post-translationally by enzymes encoded within the gene cluster. The timing and order of proteolysis of the phomA precursor and PTMs are still unknown. Two tyrosinase-like enzymes, phomQ1 and phomQ2, catalyze the chlorination and hydroxylation of Tyr, respectively. PhomYb, is proposed to be involved in the construction of the macrocyclic structure. The other 4 ustYa family proteins may be involved in PTMs that generate the unique structure of phomopsin A. PhomYa is required for the hydroxylation of C-beta of Tyr. PhomYc, phomYd, and phomYe are responsible for the biosynthesis of 2,3-dehydroisoleucine (dIle), 2,3-dehydroaspartic acid (dAsp), and 3,4-dehydroproline (dPro), respectively. While dIle formation by phomYc is indispensable for the installation of dAsp by phomYd, the order of the other PTMs have not been elucidated yet. Most of the biosynthetic enzymes likely have broad substrate specificity, and thus, there might be a metabolic grid from a precursor to phomopsin A. The enzyme(s) responsible for the biosynthesis of 3,4-dehydrovaline (dVal) have also not been identified yet. Finally, phomM acts as an S-adenosylmethionine-dependent alpha-N-methyltransferase that catalyzes two successive N-methylation reactions, converting N-desmethyl-phomopsin A to phomopsin A and phomopsin A further to an N,N-dimethylated congener called phomopsin E. The sequence is that of Phomopsin biosynthesis cluster protein C' from Diaporthe leptostromiformis (Lupinosis disease fungus).